The following is a 512-amino-acid chain: Maturase K (512 aa).

This sequence belongs to the intron maturase 2 family. MatK subfamily.

It is found in the plastid. It localises to the chloroplast. Usually encoded in the trnK tRNA gene intron. Probably assists in splicing its own and other chloroplast group II introns. This is Maturase K from Zantedeschia aethiopica (White calla lily).